A 957-amino-acid chain; its full sequence is MEGFWNSKSIIRITLSFIFLFICHFLDVLAAPTRNLCRPEQRDALLAFKNEFEIGKPSPDHCKIYGIESPRKTDSWGNNSDCCNWEGVTCNAKSGEVIELDLSCSSLHGRFHSNSSIRNLHFLTTLDLSFNDFKGQITSSIENLSHLTYLDLSSNHFSGQILNSIGNLSRLTYLNLFDNQFSGQAPSSICNLSHLTFLDLSYNRFFGQFPSSIGGLSHLTTLSLFSNKFSGQIPSSIGNLSNLTTLDLSNNNFSGQIPSFIGNLSQLTFLGLFSNNFVGEIPSSFGNLNQLTRLYVDDNKLSGNFPNVLLNLTGLSLLSLSNNKFTGTLPPNITSLSNLMDFDASDNAFTGTFPSFLFTIPSLTYIRLNGNQLKGTLEFGNISSPSNLYELDIGNNNFIGPIPSSISKLVKLFRLDISHLNTQGPVDFSIFSHLKSLLDLNISHLNTTTRIDLNYFLSYFKRLLLLDLSGNHVSATNKSSVSDPPSQLIQSLYLSGCGITEFPEFVRTQHELGFLDISNNKIKGQVPDWLWRLPILYYVNLSNNTLIGFQRPSKPEPSLLYLLGSNNNFIGKIPSFICGLRSLNTLDLSDNNFNGSIPRCMGHLKSTLSVLNLRQNHLSGGLPKQIFEILRSLDVGHNQLVGKLPRSLSFFSTLEVLNVESNRINDTFPFWLSSLPKLQVLVLRSNAFHGPIHEATFPELRIIDISHNRFNGTLPTEYFVKWSAMSSLGKNEDQSNEKYMGSGLYYQDSMVLMNKGVAMELVRILTIYTAVDFSGNRFEGEIPKSIGLLKELLVLSLSNNAFSGHMPSSMGNLTALESLDVSKNKLTGEIPQELGDLSFLAYMNFSHNQLAGLVPGGQQFLTQNCSAFEDNLGLFGSSLEEVCRDIHTPASHQQFETPETEEEDEDLISWIAAAIGFGPGIAFGLMFGYILVSYKPEWFMNPFDRNNRRQKRHKTTH.

A signal peptide spans 1–30 (MEGFWNSKSIIRITLSFIFLFICHFLDVLA). The Extracellular portion of the chain corresponds to 31–910 (APTRNLCRPE…EEEDEDLISW (880 aa)). N-linked (GlcNAc...) asparagine glycosylation is found at N78, N114, N143, N167, and N191. 12 LRR repeats span residues 120-143 (LHFL…SIEN), 144-170 (LSHL…NLSR), 172-192 (TYLN…ICNL), 193-216 (SHLT…IGGL), 217-240 (SHLT…IGNL), 241-266 (SNLT…NLSQ), 268-287 (TFLG…SFGN), 288-312 (LNQL…LLNL), 313-336 (TGLS…ITSL), 338-360 (NLMD…LFTI), 361-384 (PSLT…NISS), and 386-409 (SNLY…ISKL). 4 N-linked (GlcNAc...) asparagine glycosylation sites follow: N239, N242, N252, and N263. N-linked (GlcNAc...) asparagine glycans are attached at residues N311 and N332. The N-linked (GlcNAc...) asparagine glycan is linked to N381. An LRR 13; degenerate repeat occupies 412–433 (LFRLDISHLNTQGPVDFSIFSH). LRR repeat units follow at residues 434 to 458 (LKSL…YFLS), 460 to 483 (FKRL…SVSD), 486 to 509 (SQLI…VRTQ), 510 to 533 (HELG…LWRL), 535 to 556 (ILYY…SKPE), 558 to 580 (SLLY…ICGL), 581 to 604 (RSLN…MGHL), 605 to 629 (KSTL…IFEI), 631 to 651 (RSLD…LSFF), 652 to 674 (STLE…WLSS), 675 to 697 (LPKL…EATF), 698 to 721 (PELR…YFVK), 765 to 789 (LTIY…IGLL), 790 to 813 (KELL…MGNL), 814 to 837 (TALE…LGDL), and 839 to 862 (FLAY…QFLT). N-linked (GlcNAc...) asparagine glycans are attached at residues N441, N446, and N477. N-linked (GlcNAc...) asparagine glycosylation is found at N540 and N543. The N-linked (GlcNAc...) asparagine glycan is linked to N594. N665 carries N-linked (GlcNAc...) asparagine glycosylation. N-linked (GlcNAc...) asparagine glycosylation occurs at N711. N812 carries an N-linked (GlcNAc...) asparagine glycan. N-linked (GlcNAc...) asparagine glycans are attached at residues N844 and N864. The chain crosses the membrane as a helical span at residues 911 to 931 (IAAAIGFGPGIAFGLMFGYIL). At 932–957 (VSYKPEWFMNPFDRNNRRQKRHKTTH) the chain is on the cytoplasmic side.

The protein belongs to the RLP family.

Its subcellular location is the cell membrane. This Arabidopsis thaliana (Mouse-ear cress) protein is Receptor-like protein 53.